The chain runs to 392 residues: Ribosomal RNA large subunit methyltransferase G (392 aa).

The protein belongs to the methyltransferase superfamily. RlmG family.

Its subcellular location is the cytoplasm. It catalyses the reaction guanosine(1835) in 23S rRNA + S-adenosyl-L-methionine = N(2)-methylguanosine(1835) in 23S rRNA + S-adenosyl-L-homocysteine + H(+). Its function is as follows. Specifically methylates the guanine in position 1835 (m2G1835) of 23S rRNA. This Colwellia psychrerythraea (strain 34H / ATCC BAA-681) (Vibrio psychroerythus) protein is Ribosomal RNA large subunit methyltransferase G.